A 547-amino-acid chain; its full sequence is MEVGGDTAAPAPGGAEDLEDTQFPSEEAREGGGVHAVPPDPEDEGLEETGSKDKDQPPSPSPPPQSEALSSTSRLWSPAAPENSPTCSPESSSGGQGGDPSDEEWRSQRKHVFVLSEAGKPIYSRYGSVEALSATMGVMTALVSFVQSAGDAIRAIYAEDHKLVFLQQGPLLLVAMSRTSQSAAQLRGELLAVHAQIVSTLTRASVARIFAHKQNYDLRRLLAGSERTLDRLLDSMEQDPGALLLGAVRCVPLARPLRDALGALLRRCTAPGLALSVLAVGGRLITAAQERNVLAECRLDPADLQLLLDWVGAPAFAAGEAWAPVCLPRFNPDGFFYAYVARLDAMPVCLLLLGTQREAFHAMAACRRLVEDGMHALGAMRALGEAASFSNASSASAPAYSVQAVGAPGLRHFLYKPLDIPDHHRQLPQFTSPELEAPYSREEERQRLSDLYHRLHARLHSTSRPLRLIYHVAEKETLLAWVTSKFELYTCLSPLVTKAGAILVVTKLLRWVKKEEDRLFIRYPPKYSTPPATSTDQAAHNGLFTGL.

M1 bears the N-acetylmethionine mark. The span at 1–15 (MEVGGDTAAPAPGGA) shows a compositional bias: low complexity. Residues 1-106 (MEVGGDTAAP…GGDPSDEEWR (106 aa)) are disordered. Residues S59 and S61 each carry the phosphoserine modification.

Belongs to the MON1/SAND family. Interacts with CCNT2; down-regulates CCNT2-mediated activation of viral promoters during herpes simplex virus 1/HHV-1 infection. Found in a complex with RMC1, CCZ1 MON1A and MON1B.

In Homo sapiens (Human), this protein is Vacuolar fusion protein MON1 homolog B (MON1B).